A 309-amino-acid chain; its full sequence is Elongation factor Ts (309 aa).

Residues 82–85 (TDFV) form an involved in Mg(2+) ion dislocation from EF-Tu region.

Belongs to the EF-Ts family.

Its subcellular location is the cytoplasm. In terms of biological role, associates with the EF-Tu.GDP complex and induces the exchange of GDP to GTP. It remains bound to the aminoacyl-tRNA.EF-Tu.GTP complex up to the GTP hydrolysis stage on the ribosome. This is Elongation factor Ts from Rickettsia rickettsii (strain Iowa).